The sequence spans 646 residues: Threonine--tRNA ligase (646 aa).

Residues 1 to 63 (MAQISLTFPD…ETDAKIAIHT (63 aa)) form the TGS domain. Residues 247-544 (DHRKLGREME…LIENYAGKLP (298 aa)) are catalytic. The Zn(2+) site is built by Cys-344, His-395, and His-521.

This sequence belongs to the class-II aminoacyl-tRNA synthetase family. As to quaternary structure, homodimer. Zn(2+) is required as a cofactor.

The protein resides in the cytoplasm. The enzyme catalyses tRNA(Thr) + L-threonine + ATP = L-threonyl-tRNA(Thr) + AMP + diphosphate + H(+). Catalyzes the attachment of threonine to tRNA(Thr) in a two-step reaction: L-threonine is first activated by ATP to form Thr-AMP and then transferred to the acceptor end of tRNA(Thr). Also edits incorrectly charged L-seryl-tRNA(Thr). The polypeptide is Threonine--tRNA ligase (Cereibacter sphaeroides (strain ATCC 17023 / DSM 158 / JCM 6121 / CCUG 31486 / LMG 2827 / NBRC 12203 / NCIMB 8253 / ATH 2.4.1.) (Rhodobacter sphaeroides)).